Consider the following 734-residue polypeptide: Photosystem I P700 chlorophyll a apoprotein A2 (734 aa).

The next 8 helical transmembrane spans lie at 46 to 69 (IFASHFGQLAIIFLWTSGNLFHVA), 135 to 158 (LYTGALFLLFLSALSLIAGWLHLQ), 175 to 199 (LNHHLSGLFGVSSLAWTGHLVHVAI), 273 to 291 (IAHHHLAIAILFLIAGHMY), 330 to 353 (IHFQLGLALASLGVITSLVAQHMY), 369 to 395 (AALYTHHQYIAGFIMTGAFAHGAIFFI), 417 to 439 (AIISHLSWASLFLGFHTLGLYVH), and 517 to 535 (FLVHHAIALGLHTTTLILV). [4Fe-4S] cluster contacts are provided by C559 and C568. The next 2 helical transmembrane spans lie at 575–596 (AFYLAVFWMLNTIGWVTFYWHW) and 643–665 (LSVWAWMFLFGHLVWATGFMFLI). 3 residues coordinate chlorophyll a: H654, M662, and Y670. Phylloquinone is bound at residue W671. The helical transmembrane segment at 707-727 (LVGLAHFSVGYIFTYAAFLIA) threads the bilayer.

This sequence belongs to the PsaA/PsaB family. As to quaternary structure, the PsaA/B heterodimer binds the P700 chlorophyll special pair and subsequent electron acceptors. PSI consists of a core antenna complex that captures photons, and an electron transfer chain that converts photonic excitation into a charge separation. The eukaryotic PSI reaction center is composed of at least 11 subunits. P700 is a chlorophyll a/chlorophyll a' dimer, A0 is one or more chlorophyll a, A1 is one or both phylloquinones and FX is a shared 4Fe-4S iron-sulfur center. is required as a cofactor.

Its subcellular location is the plastid. The protein localises to the chloroplast thylakoid membrane. It catalyses the reaction reduced [plastocyanin] + hnu + oxidized [2Fe-2S]-[ferredoxin] = oxidized [plastocyanin] + reduced [2Fe-2S]-[ferredoxin]. Its function is as follows. PsaA and PsaB bind P700, the primary electron donor of photosystem I (PSI), as well as the electron acceptors A0, A1 and FX. PSI is a plastocyanin-ferredoxin oxidoreductase, converting photonic excitation into a charge separation, which transfers an electron from the donor P700 chlorophyll pair to the spectroscopically characterized acceptors A0, A1, FX, FA and FB in turn. Oxidized P700 is reduced on the lumenal side of the thylakoid membrane by plastocyanin. The protein is Photosystem I P700 chlorophyll a apoprotein A2 of Gossypium hirsutum (Upland cotton).